The following is a 306-amino-acid chain: D-alanine--D-alanine ligase (306 aa).

The ATP-grasp domain occupies 101 to 300 (KVVMAAAGIP…FGELVTWMVE (200 aa)). 128-182 (LPPPYVLKPNTGGSSVGVFIVKEDQPHPPQELFRADWTFGESLMAEPFIKGLELT) lines the ATP pocket. Residues Asp-250, Glu-267, and Asn-269 each coordinate Mg(2+).

Belongs to the D-alanine--D-alanine ligase family. It depends on Mg(2+) as a cofactor. The cofactor is Mn(2+).

It localises to the cytoplasm. It carries out the reaction 2 D-alanine + ATP = D-alanyl-D-alanine + ADP + phosphate + H(+). It participates in cell wall biogenesis; peptidoglycan biosynthesis. Its function is as follows. Cell wall formation. The chain is D-alanine--D-alanine ligase from Azorhizobium caulinodans (strain ATCC 43989 / DSM 5975 / JCM 20966 / LMG 6465 / NBRC 14845 / NCIMB 13405 / ORS 571).